We begin with the raw amino-acid sequence, 194 residues long: A-type ATP synthase subunit E (194 aa).

This sequence belongs to the V-ATPase E subunit family. Has multiple subunits with at least A(3), B(3), C, D, E, F, H, I and proteolipid K(x).

The protein resides in the cell membrane. Functionally, component of the A-type ATP synthase that produces ATP from ADP in the presence of a proton gradient across the membrane. This is A-type ATP synthase subunit E from Haloferax volcanii (strain ATCC 29605 / DSM 3757 / JCM 8879 / NBRC 14742 / NCIMB 2012 / VKM B-1768 / DS2) (Halobacterium volcanii).